The primary structure comprises 463 residues: Interferon-inducible GTPase 5 (463 aa).

The IRG-type G domain occupies 53–235 (IRLEVGVTGE…PTLVSTWEHD (183 aa)). GTP contacts are provided by residues 62-69 (ESGAGKSS), 87-91 (TGVME), 169-171 (KVD), and 216-218 (SNL). Ser247 and Ser304 each carry phosphoserine. The disordered stretch occupies residues 404–437 (LEDDEPQPEVSLEVASDNGVEKGGSGEGGGEEAP).

The protein belongs to the TRAFAC class dynamin-like GTPase superfamily. IRG family. As to expression, abundantly expressed in semen (at protein level).

The protein localises to the cell projection. Its subcellular location is the cilium. It localises to the flagellum. It is found in the lipid droplet. The enzyme catalyses GTP + H2O = GDP + phosphate + H(+). Functionally, required for sperm motility and therefore male fertility, via positive regulation of spermatozoa fibrous sheath formation. The polypeptide is Interferon-inducible GTPase 5 (Homo sapiens (Human)).